The chain runs to 89 residues: Small ribosomal subunit protein uS15 (89 aa).

Basic and acidic residues predominate over residues 1–18 (MSLDTAEKQKLIENHQVH). The segment at 1 to 23 (MSLDTAEKQKLIENHQVHPTDTG) is disordered.

It belongs to the universal ribosomal protein uS15 family. In terms of assembly, part of the 30S ribosomal subunit. Forms a bridge to the 50S subunit in the 70S ribosome, contacting the 23S rRNA.

One of the primary rRNA binding proteins, it binds directly to 16S rRNA where it helps nucleate assembly of the platform of the 30S subunit by binding and bridging several RNA helices of the 16S rRNA. Its function is as follows. Forms an intersubunit bridge (bridge B4) with the 23S rRNA of the 50S subunit in the ribosome. This Prochlorococcus marinus (strain MIT 9301) protein is Small ribosomal subunit protein uS15.